Reading from the N-terminus, the 280-residue chain is Bifunctional protein FolD (280 aa).

NADP(+)-binding positions include 165–167 (GRS), Ser-190, and Ile-231.

Belongs to the tetrahydrofolate dehydrogenase/cyclohydrolase family. In terms of assembly, homodimer.

It catalyses the reaction (6R)-5,10-methylene-5,6,7,8-tetrahydrofolate + NADP(+) = (6R)-5,10-methenyltetrahydrofolate + NADPH. It carries out the reaction (6R)-5,10-methenyltetrahydrofolate + H2O = (6R)-10-formyltetrahydrofolate + H(+). Its pathway is one-carbon metabolism; tetrahydrofolate interconversion. Functionally, catalyzes the oxidation of 5,10-methylenetetrahydrofolate to 5,10-methenyltetrahydrofolate and then the hydrolysis of 5,10-methenyltetrahydrofolate to 10-formyltetrahydrofolate. The chain is Bifunctional protein FolD from Moorella thermoacetica (strain ATCC 39073 / JCM 9320).